The chain runs to 1708 residues: Rapamycin-insensitive companion of mTOR (1708 aa).

The tract at residues 1–789 (MAAIGRGRSL…DKANLHALIQ (789 aa)) is interaction with NBN. Residues S21, S35, and S265 each carry the phosphoserine modification. K274 is covalently cross-linked (Glycyl lysine isopeptide (Lys-Gly) (interchain with G-Cter in ubiquitin)). A ribosome-binding domain region spans residues 521 to 570 (LKDTEEALLINLRDSQVLQHKENLDWDWNLIGTILKWPNVNLRNYKDEQL). N543, R572, and R576 together coordinate ATP. The segment covering 1021-1043 (TLSLNSESTSSRHNSESESAPSS) has biased composition (low complexity). The disordered stretch occupies residues 1021 to 1045 (TLSLNSESTSSRHNSESESAPSSMF). Residues K1092 and K1095 each carry the N6-acetyllysine modification. Disordered regions lie at residues 1101–1198 (SLTL…ENTS) and 1218–1247 (SFNT…PTAM). T1103 bears the Phosphothreonine mark. N6-acetyllysine occurs at positions 1116, 1119, and 1125. Phosphothreonine; by RPS6KB1 is present on T1135. S1138 bears the Phosphoserine mark. Over residues 1147-1158 (FTSSSAQKSLQL) the composition is skewed to polar residues. 3 positions are modified to phosphoserine: S1161, S1218, and S1234. Residues 1221–1239 (TDTTTSGISSMSSSPSRET) show a composition bias toward low complexity. T1270 is subject to Phosphothreonine. Phosphoserine is present on residues S1273, S1277, S1281, and S1283. Phosphothreonine is present on T1294. Phosphoserine is present on residues S1301 and S1312. T1331 is subject to Phosphothreonine. A phosphoserine mark is found at S1345 and S1352. T1375 carries the phosphothreonine modification. S1384 bears the Phosphoserine mark. Y1385 is modified (phosphotyrosine). Phosphoserine occurs at positions 1387, 1395, and 1410. H1514, C1519, and C1522 together coordinate Zn(2+). A phosphoserine mark is found at S1570, S1573, S1576, and S1591. Residue C1651 coordinates Zn(2+).

Belongs to the RICTOR family. As to quaternary structure, component of the mechanistic target of rapamycin complex 2 (mTORC2), consisting in two heterotretramers composed of MTOR, MLST8, RICTOR and MAPKAP1/SIN1. The mTORC2 core complex associates with PRR5/PROTOR1 and/or PRR5L/PROTOR2. Contrary to mTORC1, mTORC2 does not bind to and is not sensitive to FKBP12-rapamycin. Binds directly to MTOR and PRR5 within the TORC2 complex; interaction with MTOR is enhanced by deubiquitination of RICTOR by USP9X. Interaction with MAPKAP1 is not enhanced by RICTOR deubiquitination by USP9X. Interacts with CCDC28B. Interacts with NBN. Interacts with SIK3. Interacts with NCKAP1L. Interacts with ARMH4 (via cytoplasmic tail); this interaction bridges ARMH4 to the mTORC2 complex and inhibits the mTORC2 kinase activity. Interacts with UBXN2A. Interacts with TSPAN8. In terms of processing, phosphorylated by MTOR; when part of mTORC2. Phosphorylated at Thr-1135 by RPS6KB1 downstream of the mTORC1 complex: phosphorylation of RICTOR inhibits mTORC2 signaling by creating a binding site for 14-3-3 proteins. Phosphorylated at Ser-1234 by GSK3B in response to endoplasmic stress, inhibiting mTORC2 signaling. Ubiquitinated by the SCF(FBXW7) complex, leading to its degradation by the proteasome. Deubiquitinated by USP9X; deubiquitination stabilizes RICTOR and enhances its binding to MTOR, thus promoting mTORC2 complex assembly. Post-translationally, acetylated by EP300/p300 in response to glucose, leading to activate the mTORC2 complex. Acetylation by BLOC1S1/GCN5L1 in response to hypotoxic stress protects RICTOR against ubiquitination and subsequent degradation by the proteasome. As to expression, highest levels in liver and brain with expression also detected in heart, muscle, spleen and kidney (at protein level).

The protein localises to the cell membrane. It localises to the endoplasmic reticulum membrane. Its subcellular location is the lysosome membrane. In terms of biological role, component of the mechanistic target of rapamycin complex 2 (mTORC2), which transduces signals from growth factors to pathways involved in proliferation, cytoskeletal organization, lipogenesis and anabolic output. In response to growth factors, mTORC2 phosphorylates and activates AGC protein kinase family members, including AKT (AKT1, AKT2 and AKT3), PKC (PRKCA, PRKCB and PRKCE) and SGK1. In contrast to mTORC1, mTORC2 is nutrient-insensitive. Within the mTORC2 complex, RICTOR probably acts as a molecular adapter. RICTOR is responsible for the FKBP12-rapamycin-insensitivity of mTORC2. mTORC2 plays a critical role in AKT1 activation by mediating phosphorylation of different sites depending on the context, such as 'Thr-450', 'Ser-473', 'Ser-477' or 'Thr-479', facilitating the phosphorylation of the activation loop of AKT1 on 'Thr-308' by PDPK1/PDK1 which is a prerequisite for full activation. mTORC2 catalyzes the phosphorylation of SGK1 at 'Ser-422' and of PRKCA on 'Ser-657'. The mTORC2 complex also phosphorylates various proteins involved in insulin signaling, such as FBXW8 and IGF2BP1. mTORC2 acts upstream of Rho GTPases to regulate the actin cytoskeleton, probably by activating one or more Rho-type guanine nucleotide exchange factors. mTORC2 promotes the serum-induced formation of stress-fibers or F-actin. Plays an essential role in embryonic growth and development. This Mus musculus (Mouse) protein is Rapamycin-insensitive companion of mTOR.